Reading from the N-terminus, the 556-residue chain is Oxygen-dependent choline dehydrogenase (556 aa).

4-33 (DYIIIGAGSAGNVLATRLTEDPNTSVLLLE) contributes to the FAD binding site. The active-site Proton acceptor is His-473.

The protein belongs to the GMC oxidoreductase family. FAD is required as a cofactor.

The catalysed reaction is choline + A = betaine aldehyde + AH2. It catalyses the reaction betaine aldehyde + NAD(+) + H2O = glycine betaine + NADH + 2 H(+). The protein operates within amine and polyamine biosynthesis; betaine biosynthesis via choline pathway; betaine aldehyde from choline (cytochrome c reductase route): step 1/1. Involved in the biosynthesis of the osmoprotectant glycine betaine. Catalyzes the oxidation of choline to betaine aldehyde and betaine aldehyde to glycine betaine at the same rate. The protein is Oxygen-dependent choline dehydrogenase of Escherichia coli (strain K12 / DH10B).